A 114-amino-acid chain; its full sequence is Large ribosomal subunit protein uL22 (114 aa).

The protein belongs to the universal ribosomal protein uL22 family. Part of the 50S ribosomal subunit.

In terms of biological role, this protein binds specifically to 23S rRNA; its binding is stimulated by other ribosomal proteins, e.g. L4, L17, and L20. It is important during the early stages of 50S assembly. It makes multiple contacts with different domains of the 23S rRNA in the assembled 50S subunit and ribosome. Functionally, the globular domain of the protein is located near the polypeptide exit tunnel on the outside of the subunit, while an extended beta-hairpin is found that lines the wall of the exit tunnel in the center of the 70S ribosome. The chain is Large ribosomal subunit protein uL22 from Ehrlichia ruminantium (strain Gardel).